A 200-amino-acid polypeptide reads, in one-letter code: MARCKS-related protein (200 aa).

Residues 1 to 200 (MGSQSSKAPR…PTPASAEQNE (200 aa)) form a disordered region. A lipid anchor (N-myristoyl glycine) is attached at Gly-2. Thr-14 bears the Phosphothreonine mark. Positions 16 to 26 (EEAAGASPAKA) are enriched in low complexity. Phosphoserine occurs at positions 22, 36, and 48. Positions 53–64 (GTDEAAGATGDA) are enriched in low complexity. A Phosphoserine modification is found at Ser-71. The segment covering 74–85 (AEAKGEVAPKET) has biased composition (basic and acidic residues). Thr-85 carries the post-translational modification Phosphothreonine. Residues 86 to 98 (PKKKKKFSFKKPF) are compositionally biased toward basic residues. The tract at residues 87-110 (KKKKKFSFKKPFKLSGLSFKRNRK) is effector domain involved in lipid-binding and calmodulin-binding. Phosphoserine; by PKC occurs at positions 93, 101, and 104. At Ser-119 the chain carries Phosphoserine. A Phosphoserine; by MAPK8 modification is found at Ser-120. Phosphoserine is present on residues Ser-132 and Ser-135. At Thr-148 the chain carries Phosphothreonine; by MAPK8. Phosphoserine occurs at positions 151, 162, and 165. Positions 156–165 (AKGAEASAAS) are enriched in low complexity. Thr-170 bears the Phosphothreonine mark. Over residues 178–200 (AAEPSTPSGPESGPTPASAEQNE) the composition is skewed to low complexity. Thr-183 is subject to Phosphothreonine; by MAPK8. Thr-192 is subject to Phosphothreonine.

The protein belongs to the MARCKS family. Binds to filamentous actin (F-actin), but not to monomeric G-actin, independently of its phosphorylation status. Interacts with calmodulin. Post-translationally, phosphorylated. Phosphorylation at Ser-120 and Thr-183 is non-redundantly catalyzed by MAPK8 in vivo. Phosphorylation at Thr-148 is preferentially catalyzed by MAPK8 in vivo, but this modification can also be catalyzed by other kinases in the absence of MAPK8. May be phosphorylated by protein kinase C, which disrupts the interaction with calmodulin. As to expression, expressed at high levels in brain cortex and hippocampus, including dentate gyrus, anterior olfactory nucleus, primary olfactory cortex, entorhinal cortex, medial preoptic area and dorsomedial hypothalamic nucleus (at protein level). Expressed in neuronal cells (at protein level). Detected in the retina. Strongly expressed in testis and uterus; expressed at lower levels in cerebellum, cerebrum, adipose tissue, spleen, kidney, thyroid, liver, lung, skeletal muscle and heart. Detected in T-cells and B-cells.

The protein resides in the cytoplasm. It localises to the cytoskeleton. The protein localises to the cell membrane. In terms of biological role, involved in the control of cell movement by regulating actin cytoskeleton homeostasis and filopodium and lamellipodium formation. When unphosphorylated, induces cell migration. When phosphorylated by MAPK8, induces actin bundles formation and stabilization, thereby reducing actin plasticity, hence restricting cell movement, including neuronal migration. May be involved in coupling the protein kinase C and calmodulin signal transduction systems. The chain is MARCKS-related protein (Marcksl1) from Mus musculus (Mouse).